Here is a 419-residue protein sequence, read N- to C-terminus: Metacaspase-1A (419 aa).

The tract at residues 1-89 (MHHQQSSYGG…PPDQPVSFGQ (89 aa)) is disordered. Over residues 41-51 (NGYNSPQQNYG) the composition is skewed to polar residues. The segment covering 59–71 (YQQQSAYQNSYNQ) has biased composition (low complexity). Catalysis depends on residues H190 and C246.

Belongs to the peptidase C14B family.

Functionally, involved in cell death (apoptosis). The chain is Metacaspase-1A (casA) from Aspergillus oryzae (strain ATCC 42149 / RIB 40) (Yellow koji mold).